Here is a 172-residue protein sequence, read N- to C-terminus: Peptidyl-prolyl cis-trans isomerase (172 aa).

In terms of domain architecture, PPIase cyclophilin-type spans 7 to 170 (FFDMAIAGNP…RPVTIADCGQ (164 aa)).

This sequence belongs to the cyclophilin-type PPIase family. Expressed in meristematic tissues, with higher levels in nodules.

Its subcellular location is the cytoplasm. The catalysed reaction is [protein]-peptidylproline (omega=180) = [protein]-peptidylproline (omega=0). Binds cyclosporin A (CsA). CsA mediates some of its effects via an inhibitory action on PPIase. PPIases accelerate the folding of proteins. It catalyzes the cis-trans isomerization of proline imidic peptide bonds in oligopeptides. The protein is Peptidyl-prolyl cis-trans isomerase of Lupinus luteus (European yellow lupine).